Here is a 533-residue protein sequence, read N- to C-terminus: Homeobox protein DTH-1 (533 aa).

Disordered stretches follow at residues 1–28 (MSSN…NECP) and 308–378 (LPQN…GKKR). A compositionally biased stretch (basic and acidic residues) spans 8–19 (VKYDTNFDREGY). Residues 308 to 317 (LPQNLPNPNQ) are compositionally biased toward low complexity. Residues 318-333 (TDSIYSSSINENNQPI) are compositionally biased toward polar residues. Positions 360–371 (SVENNDNENSSS) are enriched in low complexity. The segment at residues 377–436 (KRKRRVLFSKKQILELERHFRQKKYLSAPEREHLANLIGLSPTQVKIWFQNHRYKMKRAH) is a DNA-binding region (homeobox).

It belongs to the NK-2 homeobox family. Intestine and unidentified peripheral parenchymal cells. Slightly higher levels in the cephalic region compared to other body regions.

It localises to the nucleus. Its function is as follows. This protein might be involved in determination and/or differentiation of nerve cells in the continuous replacement of neurons in the cephalic region. The chain is Homeobox protein DTH-1 (DTH-1) from Girardia tigrina (Planarian).